The chain runs to 1530 residues: Glutamate-rich protein 3 (1530 aa).

Disordered stretches follow at residues arginine 165 to serine 187, serine 408 to glycine 429, methionine 475 to isoleucine 661, threonine 673 to glutamate 724, glutamate 773 to leucine 870, arginine 923 to glutamate 1146, leucine 1167 to glycine 1334, leucine 1360 to glutamate 1383, and tyrosine 1425 to valine 1530. 3 stretches are compositionally biased toward basic and acidic residues: residues glutamate 415–glycine 429, leucine 531–glutamate 545, and proline 552–asparagine 562. Positions aspartate 563–lysine 574 are enriched in acidic residues. The span at serine 581 to serine 592 shows a compositional bias: low complexity. The span at valine 600–arginine 616 shows a compositional bias: basic and acidic residues. The span at glutamate 638 to glutamine 647 shows a compositional bias: acidic residues. 2 stretches are compositionally biased toward basic and acidic residues: residues leucine 684–alanine 717 and glutamate 773–aspartate 787. Positions glycine 834–alanine 845 are enriched in low complexity. The span at glycine 943–proline 958 shows a compositional bias: acidic residues. Composition is skewed to basic and acidic residues over residues glutamate 979–threonine 992, glutamate 1039–lysine 1116, and leucine 1173–glycine 1212. A compositionally biased stretch (low complexity) spans glutamate 1213 to glycine 1225. Residues alanine 1289–lysine 1300 show a composition bias toward acidic residues. Basic and acidic residues-rich tracts occupy residues glycine 1464–serine 1487 and aspartate 1502–glutamine 1511. Residues glutamate 1517–valine 1530 show a composition bias toward polar residues.

In terms of assembly, interacts with CLTC/clathrin heavy chain 1, AP2A2/AP-2 complex subunit alpha-2, and PIK3C2A/phosphatidylinositol 4-phosphate 3-kinase C2 domain-containing subunit alpha. Expressed in dopaminergic and serotoninergic neurons.

The protein localises to the cell projection. It is found in the cilium. The protein resides in the cytoplasm. In terms of biological role, component of the primary cilium that controls cilium formation and length. May function within retrograde intraflagellar transport (IFT)-associated pathways to remove signaling proteins from primary cilia. Also involved in neuronal vesicle biogenesis and neurotransmitter vesicular function. This chain is Glutamate-rich protein 3, found in Homo sapiens (Human).